The chain runs to 228 residues: Uracil-DNA glycosylase (228 aa).

Asp-64 serves as the catalytic Proton acceptor.

It belongs to the uracil-DNA glycosylase (UDG) superfamily. UNG family.

It is found in the cytoplasm. It carries out the reaction Hydrolyzes single-stranded DNA or mismatched double-stranded DNA and polynucleotides, releasing free uracil.. In terms of biological role, excises uracil residues from the DNA which can arise as a result of misincorporation of dUMP residues by DNA polymerase or due to deamination of cytosine. This Yersinia pestis bv. Antiqua (strain Antiqua) protein is Uracil-DNA glycosylase.